A 257-amino-acid chain; its full sequence is NAD-capped RNA hydrolase NudC (257 aa).

2 residues coordinate substrate: lysine 25 and arginine 69. Cysteine 98 and cysteine 101 together coordinate Zn(2+). Substrate is bound at residue glutamate 111. Zn(2+)-binding residues include cysteine 116 and cysteine 119. Tyrosine 124 contributes to the substrate binding site. One can recognise a Nudix hydrolase domain in the interval 125–248 (PQIAPCIIVA…TVARRLIEDT (124 aa)). Alanine 158, glutamate 174, and glutamate 178 together coordinate a divalent metal cation. The Nudix box motif lies at 159–180 (GFVEVGETLEQAVAREVMEESG). 192–199 (QPWPFPQS) contacts substrate. Glutamate 219 lines the a divalent metal cation pocket. Substrate is bound at residue alanine 241.

Belongs to the Nudix hydrolase family. NudC subfamily. Homodimer. Mg(2+) is required as a cofactor. Requires Mn(2+) as cofactor. Zn(2+) serves as cofactor.

The enzyme catalyses a 5'-end NAD(+)-phospho-ribonucleoside in mRNA + H2O = a 5'-end phospho-adenosine-phospho-ribonucleoside in mRNA + beta-nicotinamide D-ribonucleotide + 2 H(+). The catalysed reaction is NAD(+) + H2O = beta-nicotinamide D-ribonucleotide + AMP + 2 H(+). It carries out the reaction NADH + H2O = reduced beta-nicotinamide D-ribonucleotide + AMP + 2 H(+). Functionally, mRNA decapping enzyme that specifically removes the nicotinamide adenine dinucleotide (NAD) cap from a subset of mRNAs by hydrolyzing the diphosphate linkage to produce nicotinamide mononucleotide (NMN) and 5' monophosphate mRNA. The NAD-cap is present at the 5'-end of some mRNAs and stabilizes RNA against 5'-processing. Has preference for mRNAs with a 5'-end purine. Catalyzes the hydrolysis of a broad range of dinucleotide pyrophosphates. The protein is NAD-capped RNA hydrolase NudC of Shigella flexneri serotype 5b (strain 8401).